The following is a 501-amino-acid chain: ATP synthase subunit alpha (501 aa).

169-176 contacts ATP; that stretch reads GDRQTGKT.

The protein belongs to the ATPase alpha/beta chains family. F-type ATPases have 2 components, CF(1) - the catalytic core - and CF(0) - the membrane proton channel. CF(1) has five subunits: alpha(3), beta(3), gamma(1), delta(1), epsilon(1). CF(0) has three main subunits: a(1), b(2) and c(9-12). The alpha and beta chains form an alternating ring which encloses part of the gamma chain. CF(1) is attached to CF(0) by a central stalk formed by the gamma and epsilon chains, while a peripheral stalk is formed by the delta and b chains.

It localises to the cell membrane. The catalysed reaction is ATP + H2O + 4 H(+)(in) = ADP + phosphate + 5 H(+)(out). Its function is as follows. Produces ATP from ADP in the presence of a proton gradient across the membrane. The alpha chain is a regulatory subunit. This is ATP synthase subunit alpha from Streptococcus agalactiae serotype III (strain NEM316).